The sequence spans 649 residues: Glycerol-3-phosphate dehydrogenase, mitochondrial (649 aa).

69-97 (DVLIIGGGATGTGCALDAATRGLNVALVE) is an FAD binding site.

Belongs to the FAD-dependent glycerol-3-phosphate dehydrogenase family. It depends on FAD as a cofactor.

The protein resides in the mitochondrion inner membrane. The protein localises to the mitochondrion intermembrane space. The enzyme catalyses a quinone + sn-glycerol 3-phosphate = dihydroxyacetone phosphate + a quinol. Its pathway is polyol metabolism; glycerol degradation via glycerol kinase pathway; glycerone phosphate from sn-glycerol 3-phosphate (anaerobic route): step 1/1. This Saccharomyces cerevisiae (strain ATCC 204508 / S288c) (Baker's yeast) protein is Glycerol-3-phosphate dehydrogenase, mitochondrial (GUT2).